The following is a 335-amino-acid chain: Spike protein P1 (335 aa).

As to quaternary structure, monomer.

The protein localises to the virion. Functionally, receptor binding protein located at the fivefold vertices. The polypeptide is Spike protein P1 (I) (Pseudoalteromonas espejiana (Bacteriophage PM2)).